Reading from the N-terminus, the 290-residue chain is UPF0761 membrane protein YihY (290 aa).

Over 1–43 the chain is Cytoplasmic; the sequence is MLKTVHQKAGRHTRPVRAWLKLLWQRIDEDNMTTLAGNLAYVS. The chain crosses the membrane as a helical span at residues 44-64; the sequence is LLSLVPLIAVVFALFAAFPMF. Residues 65–103 are Periplasmic-facing; the sequence is SDVSIQLRHFIFANFMPATGDVIQRYIEQFVANSNKMTA. A helical transmembrane segment spans residues 104 to 124; it reads VGACGLIVTALLLMYAIDSAL. The Cytoplasmic portion of the chain corresponds to 125–139; the sequence is NTIWRSKRTRPKVYS. Residues 140 to 160 form a helical membrane-spanning segment; sequence FAVYWMILTLGPLLAGVSLAI. The Periplasmic segment spans residues 161-179; it reads SSYLLSLRWASDLNTVIDN. A helical membrane pass occupies residues 180–200; sequence VLHILPLLLSWISFWLLYSIV. The Cytoplasmic segment spans residues 201–209; it reads PTTRVPNRD. Residues 210 to 230 form a helical membrane-spanning segment; that stretch reads ALVGAFVAALLFEAGKKGFAL. The Periplasmic portion of the chain corresponds to 231–243; it reads YITMFPSYQLIYG. Residues 244–264 traverse the membrane as a helical segment; the sequence is VLAVIPILFVWVYWTWCIVLL. Residues 265–290 are Cytoplasmic-facing; the sequence is GAEITVTLGEYRKLKQAAEQEEADQP.

It belongs to the UPF0761 family.

It localises to the cell inner membrane. This chain is UPF0761 membrane protein YihY, found in Salmonella typhimurium (strain LT2 / SGSC1412 / ATCC 700720).